Here is a 150-residue protein sequence, read N- to C-terminus: uncharacterized protein (150 aa).

The region spanning 5-66 (LDKVDRRLLE…KPNYKKLNLG (62 aa)) is the HTH asnC-type domain. A DNA-binding region (H-T-H motif) is located at residues 24-43 (IATLSKKLGIPRTTVHYRIK).

This is an uncharacterized protein from Pyrococcus horikoshii (strain ATCC 700860 / DSM 12428 / JCM 9974 / NBRC 100139 / OT-3).